The chain runs to 393 residues: Reticulon-like protein 2 (393 aa).

The segment covering 1 to 21 (MNRNTTTNKNANLNNSRNANA) has biased composition (low complexity). Residues 1–25 (MNRNTTTNKNANLNNSRNANAPGEA) are disordered. Over 1 to 60 (MNRNTTTNKNANLNNSRNANAPGEAGHQNKTGLIYWTNPSKSGASFAATLVSLLILRNVN) the chain is Cytoplasmic. Positions 30–236 (KTGLIYWTNP…SISNENKSST (207 aa)) constitute a Reticulon domain. Residues 61–81 (VISVLLKIGYMVLFTSFAVEL) traverse the membrane as a helical segment. At 82–149 (STKVLFDKGV…IGVSLYFLHG (68 aa)) the chain is on the lumenal side. The N-linked (GlcNAc...) asparagine glycan is linked to N137. The helical transmembrane segment at 150-170 (LFAIFSMNTVLIMTTIFLYTV) threads the bilayer. The Cytoplasmic portion of the chain corresponds to 171–393 (PLIYDRKQAR…HGLKQKLQHA (223 aa)). Disordered stretches follow at residues 214 to 313 (IIPP…DVKT) and 339 to 393 (GDYN…LQHA). Positions 220–285 (DEGSYSTSIS…PVSQNENIGT (66 aa)) are enriched in polar residues. S278 is subject to Phosphoserine. Residues 289 to 313 (GKQEIPTEKDFNNRHENFSKPDVKT) are compositionally biased toward basic and acidic residues. Over residues 365-376 (PAESQSIPIKNN) the composition is skewed to polar residues. Residues 381–393 (KTTHGLKQKLQHA) show a composition bias toward basic residues.

Its subcellular location is the endoplasmic reticulum membrane. The protein is Reticulon-like protein 2 (RTN2) of Saccharomyces cerevisiae (strain ATCC 204508 / S288c) (Baker's yeast).